A 399-amino-acid polypeptide reads, in one-letter code: S-adenosylmethionine synthase (399 aa).

Histidine 15 lines the ATP pocket. Mg(2+) is bound at residue aspartate 17. Residue glutamate 43 coordinates K(+). L-methionine is bound by residues glutamate 56 and glutamine 99. The tract at residues 99-109 (QSPDIAGGVDH) is flexible loop. Residues 175–177 (DAK), 242–243 (RF), aspartate 251, 257–258 (RK), alanine 274, and lysine 278 contribute to the ATP site. Aspartate 251 lines the L-methionine pocket. Lysine 282 contacts L-methionine.

The protein belongs to the AdoMet synthase family. Homotetramer; dimer of dimers. Mg(2+) serves as cofactor. Requires K(+) as cofactor.

It localises to the cytoplasm. It catalyses the reaction L-methionine + ATP + H2O = S-adenosyl-L-methionine + phosphate + diphosphate. The protein operates within amino-acid biosynthesis; S-adenosyl-L-methionine biosynthesis; S-adenosyl-L-methionine from L-methionine: step 1/1. In terms of biological role, catalyzes the formation of S-adenosylmethionine (AdoMet) from methionine and ATP. The overall synthetic reaction is composed of two sequential steps, AdoMet formation and the subsequent tripolyphosphate hydrolysis which occurs prior to release of AdoMet from the enzyme. The protein is S-adenosylmethionine synthase of Lactobacillus helveticus (strain DPC 4571).